The sequence spans 365 residues: Aminomethyltransferase (365 aa).

This sequence belongs to the GcvT family. The glycine cleavage system is composed of four proteins: P, T, L and H.

The enzyme catalyses N(6)-[(R)-S(8)-aminomethyldihydrolipoyl]-L-lysyl-[protein] + (6S)-5,6,7,8-tetrahydrofolate = N(6)-[(R)-dihydrolipoyl]-L-lysyl-[protein] + (6R)-5,10-methylene-5,6,7,8-tetrahydrofolate + NH4(+). The glycine cleavage system catalyzes the degradation of glycine. This is Aminomethyltransferase from Yersinia pseudotuberculosis serotype O:3 (strain YPIII).